Consider the following 819-residue polypeptide: Myosin light chain kinase 3 (819 aa).

The segment at 146 to 460 is disordered; that stretch reads VPWRRGSPGD…PGVGNPEPEQ (315 aa). S152 carries the post-translational modification Phosphoserine. 2 stretches are compositionally biased toward basic and acidic residues: residues 158 to 170 and 183 to 196; these read EENKERVEEEGAK and DAREPGEESQKADV. Pro residues predominate over residues 307-318; that stretch reads GPGPQCPGPPGL. Residues S355, S401, and S408 each carry the phosphoserine modification. Residues 515 to 770 enclose the Protein kinase domain; it reads VCQHEVLGGG…ATQCLKHEWL (256 aa). ATP is bound by residues 521 to 529 and K544; that span reads LGGGRFGQV. D636 serves as the catalytic Proton acceptor.

This sequence belongs to the protein kinase superfamily. CAMK Ser/Thr protein kinase family. Mg(2+) is required as a cofactor. Phosphorylated on serine residues.

It localises to the cytoplasm. The enzyme catalyses L-seryl-[myosin light chain] + ATP = O-phospho-L-seryl-[myosin light chain] + ADP + H(+). It catalyses the reaction L-threonyl-[myosin light chain] + ATP = O-phospho-L-threonyl-[myosin light chain] + ADP + H(+). Kinase that phosphorylates MYL2 in vitro. Promotes sarcomere formation in cardiomyocytes and increases cardiomyocyte contractility. The chain is Myosin light chain kinase 3 (MYLK3) from Pongo abelii (Sumatran orangutan).